The following is a 249-amino-acid chain: UDP-2,3-diacylglucosamine hydrolase (249 aa).

Mn(2+) contacts are provided by Asp7, His9, Asp40, Asn78, and His113. Position 78–79 (78–79 (NR)) interacts with substrate. The substrate site is built by Asp121, Ser159, Thr163, Lys166, and His194. Mn(2+) contacts are provided by His194 and His196.

This sequence belongs to the LpxH family. The cofactor is Mn(2+).

It localises to the cell inner membrane. The enzyme catalyses UDP-2-N,3-O-bis[(3R)-3-hydroxytetradecanoyl]-alpha-D-glucosamine + H2O = 2-N,3-O-bis[(3R)-3-hydroxytetradecanoyl]-alpha-D-glucosaminyl 1-phosphate + UMP + 2 H(+). It participates in glycolipid biosynthesis; lipid IV(A) biosynthesis; lipid IV(A) from (3R)-3-hydroxytetradecanoyl-[acyl-carrier-protein] and UDP-N-acetyl-alpha-D-glucosamine: step 4/6. Its function is as follows. Hydrolyzes the pyrophosphate bond of UDP-2,3-diacylglucosamine to yield 2,3-diacylglucosamine 1-phosphate (lipid X) and UMP by catalyzing the attack of water at the alpha-P atom. Involved in the biosynthesis of lipid A, a phosphorylated glycolipid that anchors the lipopolysaccharide to the outer membrane of the cell. The sequence is that of UDP-2,3-diacylglucosamine hydrolase from Pseudomonas fluorescens (strain SBW25).